The primary structure comprises 488 residues: MEPFLRRRLAFLSFFWDKIWPAGGEPDHGTPGSLDPNTDPVPTLPAEPCSPFPQLFLALYDFTARCGGELSVRRGDRLCALEEGGGYIFARRLSGQPSAGLVPITHVAKASPETLSDQPWYFSGVSRTQAQQLLLSPPNEPGAFLIRPSESSLGGYSLSVRAQAKVCHYRVSMAADGSLYLQKGRLFPGLEELLTYYKANWKLIQNPLLQPCMPQKAPRQDVWERPHSEFALGRKLGEGYFGEVWEGLWLGSLPVAIKVIKSANMKLTDLAKEIQTLKGLRHERLIRLHAVCSGGEPVYIVTELMRKGNLQAFLGTPEGRALRLPPLLGFACQVAEGMSYLEEQRVVHRDLAARNVLVDDGLACKVADFGLARLLKDDIYSPSSSSKIPVKWTAPEAANYRVFSQKSDVWSFGVLLHEVFTYGQCPYEGMTNHETLQQIMRGYRLPRPAACPAEVYVLMLECWRSSPEERPSFATLREKLHAIHRCHP.

An SH3 domain is found at 51 to 112; the sequence is PFPQLFLALY…PITHVAKASP (62 aa). In terms of domain architecture, SH2 spans 120–212; the sequence is WYFSGVSRTQ…LIQNPLLQPC (93 aa). The Protein kinase domain occupies 230 to 488; that stretch reads FALGRKLGEG…KLHAIHRCHP (259 aa). ATP-binding positions include 236–244 and lysine 258; that span reads LGEGYFGEV. The active-site Proton acceptor is the aspartate 350. Tyrosine 380 is modified (phosphotyrosine; by autocatalysis).

The protein belongs to the protein kinase superfamily. Tyr protein kinase family. SRC subfamily. As to quaternary structure, interacts (via the SH2 and SH3 domains) with DOK1. Interacts with KHDRBS1/SAM68 and VIM. Highly expressed in most breast cancers (at protein level).

The protein localises to the cytoplasm. It carries out the reaction L-tyrosyl-[protein] + ATP = O-phospho-L-tyrosyl-[protein] + ADP + H(+). Its function is as follows. Non-receptor tyrosine-protein kinase which phosphorylates DOK1 on tyrosine residues. Also phosphorylates KHDRBS1/SAM68 and VIM on tyrosine residues. Phosphorylation of KHDRBS1 is EGF-dependent. Phosphorylates OTUB1, promoting deubiquitination of RPTOR. This is Tyrosine-protein kinase Srms (SRMS) from Homo sapiens (Human).